The primary structure comprises 474 residues: Bifunctional protein GlmU (474 aa).

Positions methionine 1–proline 232 are pyrophosphorylase. Residues lysine 23, glutamine 78, glycine 83 to threonine 84, serine 105 to aspartate 107, glycine 142, glutamate 157, and asparagine 230 each bind UDP-N-acetyl-alpha-D-glucosamine. Aspartate 107 is a binding site for Mg(2+). Mg(2+) is bound at residue asparagine 230. The interval leucine 233–glutamine 253 is linker. The interval glycine 254–alanine 474 is N-acetyltransferase. UDP-N-acetyl-alpha-D-glucosamine-binding residues include arginine 349 and lysine 367. Histidine 379 functions as the Proton acceptor in the catalytic mechanism. The UDP-N-acetyl-alpha-D-glucosamine site is built by tyrosine 382 and asparagine 393. Acetyl-CoA is bound by residues alanine 396, asparagine 402–tyrosine 403, serine 421, glycine 439, and arginine 456. A disordered region spans residues valine 454–alanine 474.

In the N-terminal section; belongs to the N-acetylglucosamine-1-phosphate uridyltransferase family. It in the C-terminal section; belongs to the transferase hexapeptide repeat family. Homotrimer. Mg(2+) serves as cofactor.

Its subcellular location is the cytoplasm. It carries out the reaction alpha-D-glucosamine 1-phosphate + acetyl-CoA = N-acetyl-alpha-D-glucosamine 1-phosphate + CoA + H(+). The catalysed reaction is N-acetyl-alpha-D-glucosamine 1-phosphate + UTP + H(+) = UDP-N-acetyl-alpha-D-glucosamine + diphosphate. It functions in the pathway nucleotide-sugar biosynthesis; UDP-N-acetyl-alpha-D-glucosamine biosynthesis; N-acetyl-alpha-D-glucosamine 1-phosphate from alpha-D-glucosamine 6-phosphate (route II): step 2/2. The protein operates within nucleotide-sugar biosynthesis; UDP-N-acetyl-alpha-D-glucosamine biosynthesis; UDP-N-acetyl-alpha-D-glucosamine from N-acetyl-alpha-D-glucosamine 1-phosphate: step 1/1. Its pathway is bacterial outer membrane biogenesis; LPS lipid A biosynthesis. Functionally, catalyzes the last two sequential reactions in the de novo biosynthetic pathway for UDP-N-acetylglucosamine (UDP-GlcNAc). The C-terminal domain catalyzes the transfer of acetyl group from acetyl coenzyme A to glucosamine-1-phosphate (GlcN-1-P) to produce N-acetylglucosamine-1-phosphate (GlcNAc-1-P), which is converted into UDP-GlcNAc by the transfer of uridine 5-monophosphate (from uridine 5-triphosphate), a reaction catalyzed by the N-terminal domain. The sequence is that of Bifunctional protein GlmU from Paracidovorax citrulli (strain AAC00-1) (Acidovorax citrulli).